A 103-amino-acid chain; its full sequence is Stefin-3 (103 aa).

A Secondary area of contact motif is present at residues 52–56 (QVVAG).

It belongs to the cystatin family.

The protein resides in the cytoplasm. In terms of biological role, this is an intracellular thiol proteinase inhibitor. The sequence is that of Stefin-3 (Stfa3) from Mus musculus (Mouse).